An 836-amino-acid chain; its full sequence is Ethylene receptor 3 (836 aa).

Helical transmembrane passes span 137–157, 166–186, and 204–224; these read LIAA…AGLR, LVQF…TAFT, and LTAL…PQLL. Cu cation-binding residues include C176 and H180. The GAF domain maps to 269–413; it reads DRHTVLYTTL…VVAGQVAVAL (145 aa). A coiled-coil region spans residues 416–452; sequence ATLLEESRAMRDRLAEQNRELLQARRDALMANEARQA. The region spanning 457-691 is the Histidine kinase domain; that stretch reads MSQGMRRPIH…LVLRFQLQSP (235 aa). A Response regulatory domain is found at 718-834; sequence LLIDDDDDIN…LKDELARILQ (117 aa).

The protein belongs to the ethylene receptor family. Requires Cu cation as cofactor.

Its subcellular location is the endoplasmic reticulum membrane. It carries out the reaction ATP + protein L-histidine = ADP + protein N-phospho-L-histidine.. Its function is as follows. Ethylene receptor related to bacterial two-component regulators. Acts as a negative regulator of ethylene signaling. May delay the transition from the vegetative stage to the floral stage by up-regulating GI (GIGANTEA) and RCN1 and cause starch accumulation in stems by down-regulating the alpha-amylase AMY3D. The polypeptide is Ethylene receptor 3 (ETR3) (Oryza sativa subsp. japonica (Rice)).